We begin with the raw amino-acid sequence, 393 residues long: Endoplasmic reticulum junction formation protein lunapark-A (393 aa).

Residues 1-45 (MGAVVSRWRAKPSTVEVLEGLDKDIQVLEEYREKNHKQLKLWVYR) lie on the Cytoplasmic side of the membrane. A helical membrane pass occupies residues 46-66 (LLLYSALLYLMACAVVYAWYI). At 67-69 (PER) the chain is on the lumenal side. A helical transmembrane segment spans residues 70-90 (MIGKLIVASPFLLFPLLIWLL). Topologically, residues 91 to 393 (RKLLIILYNK…EQDVSAMEVE (303 aa)) are cytoplasmic. The stretch at 95–130 (IILYNKRTERNNEKLEELKAEKKKILEQVMETETYK) forms a coiled coil. Positions 146 to 209 (KLELETQPIG…PPEKGLSAST (64 aa)) are disordered. The segment covering 176–190 (TGRPPPVPVPGPSVP) has biased composition (pro residues). A C4-type; plays a role in ER morphology zinc finger spans residues 269–294 (CQQCLSHNGMALKEEFEYIAFRCAYC). A disordered region spans residues 314–393 (AAEAKTSQDP…EQDVSAMEVE (80 aa)). Basic and acidic residues-rich tracts occupy residues 340-353 (ESKEAGPEPVKAGD) and 364-383 (EEMKPGDPEPHTDIPDKSDG).

Belongs to the lunapark family. As to quaternary structure, homodimer; homodimerization requires the C4-type zinc finger motif and decreases during mitosis in a phosphorylation-dependent manner. In terms of processing, phosphorylated. Phosphorylation occurs during interphase. Phosphorylation also occurs during mitosis; these phosphorylations reduce both its homodimerization and the ER three-way tubular junction formation.

It is found in the endoplasmic reticulum membrane. In terms of biological role, endoplasmic reticulum (ER)-shaping membrane protein that plays a role in determining ER morphology. Involved in the stabilization of nascent three-way ER tubular junctions within the ER network. May also play a role as a curvature-stabilizing protein within three-way ER tubular junction network. This is Endoplasmic reticulum junction formation protein lunapark-A (lnpka) from Danio rerio (Zebrafish).